Reading from the N-terminus, the 136-residue chain is uncharacterized protein (136 aa).

As to expression, widely expressed.

This is an uncharacterized protein from Homo sapiens (Human).